The following is a 184-amino-acid chain: MVVIAISGQPGSGKTTVAREVARVLNLPLVSSGSLFRELAAKMGIDFIEFHKYAEKNPDIDKVVDSMAIERAKAGNVVLEGHLAAWIVRPYADICIYLKASSEIRARRISIRDKKSFEDALREVREREELNRRRYLSLYNIDINDLSVFDLVLDTSYLSINDAIRISLDYICTVLGFKYSRKFC.

8–16 is a binding site for ATP; sequence GQPGSGKTT.

The protein belongs to the cytidylate kinase family. Type 2 subfamily.

The protein localises to the cytoplasm. The enzyme catalyses CMP + ATP = CDP + ADP. It carries out the reaction dCMP + ATP = dCDP + ADP. The sequence is that of Cytidylate kinase from Pyrobaculum islandicum (strain DSM 4184 / JCM 9189 / GEO3).